We begin with the raw amino-acid sequence, 215 residues long: ATP phosphoribosyltransferase (215 aa).

The protein belongs to the ATP phosphoribosyltransferase family. Short subfamily. As to quaternary structure, heteromultimer composed of HisG and HisZ subunits.

Its subcellular location is the cytoplasm. The catalysed reaction is 1-(5-phospho-beta-D-ribosyl)-ATP + diphosphate = 5-phospho-alpha-D-ribose 1-diphosphate + ATP. The protein operates within amino-acid biosynthesis; L-histidine biosynthesis; L-histidine from 5-phospho-alpha-D-ribose 1-diphosphate: step 1/9. Catalyzes the condensation of ATP and 5-phosphoribose 1-diphosphate to form N'-(5'-phosphoribosyl)-ATP (PR-ATP). Has a crucial role in the pathway because the rate of histidine biosynthesis seems to be controlled primarily by regulation of HisG enzymatic activity. In Prochlorococcus marinus subsp. pastoris (strain CCMP1986 / NIES-2087 / MED4), this protein is ATP phosphoribosyltransferase.